Reading from the N-terminus, the 408-residue chain is LL-diaminopimelate aminotransferase (408 aa).

Substrate is bound by residues Y15 and G42. Pyridoxal 5'-phosphate-binding positions include Y72, S108–K109, Y132, N187, Y218, and S246–S248. 3 residues coordinate substrate: K109, Y132, and N187. K249 carries the post-translational modification N6-(pyridoxal phosphate)lysine. Pyridoxal 5'-phosphate is bound by residues R257 and N292. Substrate contacts are provided by N292 and R388.

Belongs to the class-I pyridoxal-phosphate-dependent aminotransferase family. LL-diaminopimelate aminotransferase subfamily. In terms of assembly, homodimer. Requires pyridoxal 5'-phosphate as cofactor.

It catalyses the reaction (2S,6S)-2,6-diaminopimelate + 2-oxoglutarate = (S)-2,3,4,5-tetrahydrodipicolinate + L-glutamate + H2O + H(+). The protein operates within amino-acid biosynthesis; L-lysine biosynthesis via DAP pathway; LL-2,6-diaminopimelate from (S)-tetrahydrodipicolinate (aminotransferase route): step 1/1. In terms of biological role, involved in the synthesis of meso-diaminopimelate (m-DAP or DL-DAP), required for both lysine and peptidoglycan biosynthesis. Catalyzes the direct conversion of tetrahydrodipicolinate to LL-diaminopimelate. This chain is LL-diaminopimelate aminotransferase, found in Prochlorococcus marinus (strain MIT 9312).